Here is a 408-residue protein sequence, read N- to C-terminus: Snake venom metalloproteinase BaP1 (408 aa).

Positions 1 to 20 are cleaved as a signal peptide; the sequence is MIEVLLVTICLAVFPYQGSS. Residues 21 to 191 constitute a propeptide that is removed on maturation; it reads IILESGNVND…KASQSNLTPE (171 aa). Position 192 is a pyrrolidone carboxylic acid (Q192). A Peptidase M12B domain is found at 198–394; that stretch reads RYIELAVVAD…HNPQCILNKP (197 aa). Intrachain disulfides connect C309–C389, C349–C373, and C351–C356. H334 lines the Zn(2+) pocket. The active site involves E335. Residues H338 and H344 each coordinate Zn(2+). Residues 395–408 constitute a propeptide that is removed on maturation; it reads LLTVSGNELLEAGE.

It belongs to the venom metalloproteinase (M12B) family. P-I subfamily. Monomer. It depends on Zn(2+) as a cofactor. Expressed by the venom gland.

The protein localises to the secreted. Its activity is regulated as follows. Inhibited by EDTA, partially inhibited by o-phenantropine, and not inhibited by PMSF, pepstatin A, and aprotinin. In terms of biological role, zinc metalloprotease that exhibits a weak hemorrhagic activity (with a minimum hemorrhagic dose of 20 ug by intradermal and intramuscular injection into mice). The basal membrane components collagen (all chains of type IV) (COL4A4), laminin and nidogen are all degraded by this toxin. Rapidly degrades the Aalpha-chain (FGA) of fibrinogen, and later on, degrades the Bbeta-chain (FGB) of fibrinogen. Also activates the complement system, and induces rat neutrophil chemotaxis. Induces edema in mouse food pad and shows a mild myotoxicity. This Bothrops asper (Terciopelo) protein is Snake venom metalloproteinase BaP1.